Here is a 333-residue protein sequence, read N- to C-terminus: Adenosine deaminase (333 aa).

Positions 12 and 14 each coordinate Zn(2+). Substrate contacts are provided by His-14, Asp-16, and Gly-170. His-197 provides a ligand contact to Zn(2+). Glu-200 serves as the catalytic Proton donor. Asp-278 provides a ligand contact to Zn(2+). Asp-279 lines the substrate pocket.

It belongs to the metallo-dependent hydrolases superfamily. Adenosine and AMP deaminases family. Adenosine deaminase subfamily. The cofactor is Zn(2+).

It carries out the reaction adenosine + H2O + H(+) = inosine + NH4(+). It catalyses the reaction 2'-deoxyadenosine + H2O + H(+) = 2'-deoxyinosine + NH4(+). Catalyzes the hydrolytic deamination of adenosine and 2-deoxyadenosine. The protein is Adenosine deaminase of Salmonella schwarzengrund (strain CVM19633).